The following is a 424-amino-acid chain: GTPase Obg (424 aa).

An Obg domain is found at 1–160 (MFDRVEIRIK…YELILELKLI (160 aa)). The OBG-type G domain maps to 161–328 (ADVAIIGYPN…LLDKVAEKLA (168 aa)). GTP contacts are provided by residues 167–174 (GYPNVGKS), 192–196 (FTTLS), 213–216 (EVPG), 280–283 (NKID), and 309–311 (SAL). Residues Ser-174 and Thr-194 each contribute to the Mg(2+) site. The OCT domain maps to 349-424 (PAPKGKMGFH…IITGRLEWYL (76 aa)).

Belongs to the TRAFAC class OBG-HflX-like GTPase superfamily. OBG GTPase family. In terms of assembly, monomer. Mg(2+) serves as cofactor.

The protein localises to the cytoplasm. An essential GTPase which binds GTP, GDP and possibly (p)ppGpp with moderate affinity, with high nucleotide exchange rates and a fairly low GTP hydrolysis rate. Plays a role in control of the cell cycle, stress response, ribosome biogenesis and in those bacteria that undergo differentiation, in morphogenesis control. This chain is GTPase Obg, found in Dehalococcoides mccartyi (strain ATCC BAA-2266 / KCTC 15142 / 195) (Dehalococcoides ethenogenes (strain 195)).